A 65-amino-acid chain; its full sequence is DNA-directed RNA polymerase subunit omega (65 aa).

The protein belongs to the RNA polymerase subunit omega family. In terms of assembly, the RNAP catalytic core consists of 2 alpha, 1 beta, 1 beta' and 1 omega subunit. When a sigma factor is associated with the core the holoenzyme is formed, which can initiate transcription.

It catalyses the reaction RNA(n) + a ribonucleoside 5'-triphosphate = RNA(n+1) + diphosphate. Its function is as follows. Promotes RNA polymerase assembly. Latches the N- and C-terminal regions of the beta' subunit thereby facilitating its interaction with the beta and alpha subunits. This chain is DNA-directed RNA polymerase subunit omega, found in Baumannia cicadellinicola subsp. Homalodisca coagulata.